Here is a 206-residue protein sequence, read N- to C-terminus: Probable thymidylate kinase (206 aa).

10-17 lines the ATP pocket; that stretch reads GIDGSGKS.

Belongs to the thymidylate kinase family.

The catalysed reaction is dTMP + ATP = dTDP + ADP. This Methanosarcina acetivorans (strain ATCC 35395 / DSM 2834 / JCM 12185 / C2A) protein is Probable thymidylate kinase.